A 312-amino-acid chain; its full sequence is Beta-ketoacyl-[acyl-carrier-protein] synthase III (312 aa).

Active-site residues include Cys112 and His237. Positions 238–242 are ACP-binding; sequence QANIR. Asn267 is a catalytic residue.

This sequence belongs to the thiolase-like superfamily. FabH family. In terms of assembly, homodimer.

It localises to the cytoplasm. It carries out the reaction malonyl-[ACP] + acetyl-CoA + H(+) = 3-oxobutanoyl-[ACP] + CO2 + CoA. The protein operates within lipid metabolism; fatty acid biosynthesis. Catalyzes the condensation reaction of fatty acid synthesis by the addition to an acyl acceptor of two carbons from malonyl-ACP. Catalyzes the first condensation reaction which initiates fatty acid synthesis and may therefore play a role in governing the total rate of fatty acid production. Possesses both acetoacetyl-ACP synthase and acetyl transacylase activities. Its substrate specificity determines the biosynthesis of branched-chain and/or straight-chain of fatty acids. In Oceanobacillus iheyensis (strain DSM 14371 / CIP 107618 / JCM 11309 / KCTC 3954 / HTE831), this protein is Beta-ketoacyl-[acyl-carrier-protein] synthase III.